We begin with the raw amino-acid sequence, 564 residues long: Septation ring formation regulator EzrA (564 aa).

Residues 1–2 (ME) are Extracellular-facing. A helical transmembrane segment spans residues 3 to 21 (FVIGLLALFLILFATGYLF). Residues 22–564 (RKNIYKEIDR…RLEADAKQPE (543 aa)) are Cytoplasmic-facing. Coiled-coil stretches lie at residues 99–159 (QKSK…AYSH), 243–281 (KGYK…EAAA), and 310–498 (KVPE…VELV).

The protein belongs to the EzrA family.

It is found in the cell membrane. Its function is as follows. Negative regulator of FtsZ ring formation; modulates the frequency and position of FtsZ ring formation. Inhibits FtsZ ring formation at polar sites. Interacts either with FtsZ or with one of its binding partners to promote depolymerization. The sequence is that of Septation ring formation regulator EzrA from Bacillus licheniformis (strain ATCC 14580 / DSM 13 / JCM 2505 / CCUG 7422 / NBRC 12200 / NCIMB 9375 / NCTC 10341 / NRRL NRS-1264 / Gibson 46).